Consider the following 216-residue polypeptide: Uracil phosphoribosyltransferase (216 aa).

5-phospho-alpha-D-ribose 1-diphosphate is bound by residues arginine 85, arginine 110, and 135-143 (DPMVATGYS). Uracil is bound by residues isoleucine 200 and 205–207 (GDA). A 5-phospho-alpha-D-ribose 1-diphosphate-binding site is contributed by aspartate 206.

This sequence belongs to the UPRTase family. Mg(2+) is required as a cofactor.

It catalyses the reaction UMP + diphosphate = 5-phospho-alpha-D-ribose 1-diphosphate + uracil. The protein operates within pyrimidine metabolism; UMP biosynthesis via salvage pathway; UMP from uracil: step 1/1. Its activity is regulated as follows. Allosterically activated by GTP. Catalyzes the conversion of uracil and 5-phospho-alpha-D-ribose 1-diphosphate (PRPP) to UMP and diphosphate. This Burkholderia cenocepacia (strain ATCC BAA-245 / DSM 16553 / LMG 16656 / NCTC 13227 / J2315 / CF5610) (Burkholderia cepacia (strain J2315)) protein is Uracil phosphoribosyltransferase.